The sequence spans 323 residues: Annexin A5 (323 aa).

Annexin repeat units lie at residues 17–88 (FNDK…ALMV), 89–160 (PAHL…SLVQ), 172–244 (GQVE…AVVK), and 248–319 (SIQG…LLCG).

The protein belongs to the annexin family.

In terms of biological role, calcium/phospholipid-binding protein which promotes membrane fusion and is involved in exocytosis. This is Annexin A5 from Cynops pyrrhogaster (Japanese fire-bellied newt).